The sequence spans 333 residues: Arylacetonitrilase (333 aa).

The 276-residue stretch at 9–284 (VRVAVTQAEP…EGIIYADLEM (276 aa)) folds into the CN hydrolase domain. The Proton acceptor role is filled by glutamate 49. Lysine 129 is an active-site residue. Cysteine 164 serves as the catalytic Nucleophile.

The protein belongs to the carbon-nitrogen hydrolase superfamily. Nitrilase family.

It catalyses the reaction a nitrile + 2 H2O = a carboxylate + NH4(+). The enzyme catalyses 4-chlorophenylacetonitrile + 2 H2O = 4-chlorophenylacetate + NH4(+). In terms of biological role, nitrilase that hydrolyzes preferentially phenylacetonitrile, (R,S)-mandelonitrile, and 3-indolylacetonitrile. The protein is Arylacetonitrilase of Aspergillus oryzae (strain ATCC 42149 / RIB 40) (Yellow koji mold).